We begin with the raw amino-acid sequence, 454 residues long: Isthmin-1 (454 aa).

Positions 1-29 (MVRLAAELLLLLGLLLLTLHITVLRGSGA) are cleaved as a signal peptide. Disordered regions lie at residues 29 to 93 (ASDR…PRSF), 125 to 144 (PDSE…WSLP), and 161 to 209 (TNSG…STDG). Polar residues predominate over residues 38 to 55 (GNNNLNLESDSTSETSFP). Basic and acidic residues predominate over residues 128–137 (EAEKDQHPEN). The 45-residue stretch at 208–252 (DGEGDWSLWSVCSVTCGNGNQKRTRSCGYACIATESRTCDRPNCP) folds into the TSP type-1 domain. 3 disulfides stabilise this stretch: C219–C246, C223–C251, and C234–C238. Residues 279-442 (LFEVDMDSCE…QKCTESPSDE (164 aa)) enclose the AMOP domain.

The protein belongs to the isthmin family. As to quaternary structure, interacts with integrin ITGAV/ITGB5.

Its subcellular location is the secreted. In terms of biological role, acts as an angiogenesis inhibitor. This Mus musculus (Mouse) protein is Isthmin-1 (Ism1).